Consider the following 127-residue polypeptide: Glycine cleavage system H protein (127 aa).

The Lipoyl-binding domain occupies 24–105 (TAVVGITDFA…YNEGWIVKMK (82 aa)). K65 is modified (N6-lipoyllysine).

Belongs to the GcvH family. The glycine cleavage system is composed of four proteins: P, T, L and H. Requires (R)-lipoate as cofactor.

In terms of biological role, the glycine cleavage system catalyzes the degradation of glycine. The H protein shuttles the methylamine group of glycine from the P protein to the T protein. The polypeptide is Glycine cleavage system H protein (Chlorobaculum parvum (strain DSM 263 / NCIMB 8327) (Chlorobium vibrioforme subsp. thiosulfatophilum)).